Reading from the N-terminus, the 208-residue chain is Large ribosomal subunit protein uL4 (208 aa).

The tract at residues 49 to 78 (KAKGISDISGTTAKPYRQKHTGRARQGSLR) is disordered.

The protein belongs to the universal ribosomal protein uL4 family. Part of the 50S ribosomal subunit.

In terms of biological role, one of the primary rRNA binding proteins, this protein initially binds near the 5'-end of the 23S rRNA. It is important during the early stages of 50S assembly. It makes multiple contacts with different domains of the 23S rRNA in the assembled 50S subunit and ribosome. Functionally, forms part of the polypeptide exit tunnel. The sequence is that of Large ribosomal subunit protein uL4 from Anaplasma phagocytophilum (strain HZ).